The primary structure comprises 168 residues: Probable chemoreceptor glutamine deamidase CheD 2 (168 aa).

The protein belongs to the CheD family.

It carries out the reaction L-glutaminyl-[protein] + H2O = L-glutamyl-[protein] + NH4(+). In terms of biological role, probably deamidates glutamine residues to glutamate on methyl-accepting chemotaxis receptors (MCPs), playing an important role in chemotaxis. The protein is Probable chemoreceptor glutamine deamidase CheD 2 of Leptospira interrogans serogroup Icterohaemorrhagiae serovar copenhageni (strain Fiocruz L1-130).